Consider the following 417-residue polypeptide: Dibenzothiophene monooxygenase (417 aa).

Positions N18–N124 are helical N-terminus. FMN-binding positions include Y96, N129 to N134, K159 to S163, R282, A369 to R370, and H391. Positions W125 to A233 are central beta-barrel N-terminus. Residues S131–K142 are lid loop. Residues P234–S417 form a helical C-terminus region.

This sequence belongs to the DszC flavin monooxygenase family. Homotetramer formed by a dimer of dimers; FMN binds between monomers of the homodimer.

The protein localises to the cytoplasm. It carries out the reaction dibenzothiophene + 2 FMNH2 + 2 O2 = dibenzothiophene 5,5-dioxide + 2 FMN + 2 H2O + 2 H(+). The enzyme catalyses dibenzothiophene + FMNH2 + O2 = dibenzothiophene 5-oxide + FMN + H2O + H(+). It catalyses the reaction dibenzothiophene 5-oxide + FMNH2 + O2 = dibenzothiophene 5,5-dioxide + FMN + H2O + H(+). It participates in sulfur metabolism; dibenzothiophene degradation. Its activity is regulated as follows. DBT degradation completely inhibited by Cu(2+), Mn(2+), p-chloromercuribenzoic acid, 2,2-bipyridyl, 1,10-phenanthroline, and strongly inhibited by Zn(2+), 5,5'- Dithiobis(2-nitrobenzoic acid) and 8-quinolinol. In terms of biological role, catalyzes the first step of the '4S' desulfurization pathway that removes covalently bound sulfur from dibenzothiophene (DBT) without breaking carbon-carbon bonds. Sulfur dioxygenase which converts DBT to DBT-sulfone (DBTO2 or DBT 5,5-dioxide) in a stepwise manner. Also acts on thioxanthen-9-one and 4,6-dimethyl DBT and 2,8-dimethyl DBT. This Rhodococcus erythropolis (Arthrobacter picolinophilus) protein is Dibenzothiophene monooxygenase.